Here is a 1027-residue protein sequence, read N- to C-terminus: Kinesin heavy chain isoform 5A (1027 aa).

A2 carries the post-translational modification N-acetylalanine. A Kinesin motor domain is found at 9 to 327; that stretch reads SIKVLCRFRP…LMFGQRAKTI (319 aa). 86–93 serves as a coordination point for ATP; the sequence is GQTSSGKT. The segment at 174-315 is microtubule-binding; sequence VSSPEEILDV…PSSYNDAETK (142 aa). The segment at 271–361 is necessary for interaction with ZFYVE27; it reads EGTKSYVPYR…KTKAQKETIA (91 aa). Residues 331–906 are a coiled coil; sequence ASVNLELTAE…VDRIKEAVRY (576 aa). The interaction with BICD2 stretch occupies residues 353 to 1027; the sequence is TKAQKETIAK…FPLHQETAAS (675 aa). Residue T397 is modified to Phosphothreonine. Positions 906–937 are disordered; the sequence is YKSSGKRGHSAQIAKPVRPGHYPASSPTNPYG. The segment at 907 to 1027 is globular; it reads KSSGKRGHSA…FPLHQETAAS (121 aa).

Belongs to the TRAFAC class myosin-kinesin ATPase superfamily. Kinesin family. Kinesin subfamily. In terms of assembly, oligomer composed of two heavy chains and two light chains. Interacts with GRIP1. Interacts with FMR1 (via C-terminus); this interaction is increased in a mGluR-dependent manner. Interacts with BORCS5. Interacts with ZFYVE27. Interacts with VAPA, VAPB, SURF4, RAB11A (GDP-bound form), RAB11B (GDP-bound form) and RTN3 in a ZFYVE27-dependent manner. Interacts with BICD2. Interacts with DTNB.

The protein localises to the cytoplasm. It localises to the perinuclear region. Its subcellular location is the cytoskeleton. The protein resides in the perikaryon. The catalysed reaction is ATP + H2O + a kinesin associated with a microtubule at position (n) = ADP + phosphate a kinesin associated with a microtubule at position (n+1, toward the plus end).. Microtubule-dependent motor required for slow axonal transport of neurofilament proteins (NFH, NFM and NFL). Can induce formation of neurite-like membrane protrusions in non-neuronal cells in a ZFYVE27-dependent manner. The ZFYVE27-KIF5A complex contributes to the vesicular transport of VAPA, VAPB, SURF4, RAB11A, RAB11B and RTN3 proteins in neurons. Required for anterograde axonal transportation of MAPK8IP3/JIP3 which is essential for MAPK8IP3/JIP3 function in axon elongation. The chain is Kinesin heavy chain isoform 5A (Kif5a) from Mus musculus (Mouse).